The sequence spans 330 residues: Anthranilate phosphoribosyltransferase (330 aa).

5-phospho-alpha-D-ribose 1-diphosphate contacts are provided by residues G75, G78 to D79, T83, N85 to T88, K103 to S111, and A115. G75 provides a ligand contact to anthranilate. Position 87 (S87) interacts with Mg(2+). N106 contributes to the anthranilate binding site. Anthranilate is bound at residue R161. D220 and E221 together coordinate Mg(2+).

It belongs to the anthranilate phosphoribosyltransferase family. In terms of assembly, homodimer. Mg(2+) serves as cofactor.

The catalysed reaction is N-(5-phospho-beta-D-ribosyl)anthranilate + diphosphate = 5-phospho-alpha-D-ribose 1-diphosphate + anthranilate. It participates in amino-acid biosynthesis; L-tryptophan biosynthesis; L-tryptophan from chorismate: step 2/5. In terms of biological role, catalyzes the transfer of the phosphoribosyl group of 5-phosphorylribose-1-pyrophosphate (PRPP) to anthranilate to yield N-(5'-phosphoribosyl)-anthranilate (PRA). The polypeptide is Anthranilate phosphoribosyltransferase (Erythrobacter litoralis (strain HTCC2594)).